Consider the following 107-residue polypeptide: Replication initiation control protein YabA (107 aa).

Zn(2+)-binding residues include His80, Cys82, Cys97, and Cys100.

Belongs to the YabA family. As to quaternary structure, homotetramer. Interacts with both DnaA and DnaN, acting as a bridge between these two proteins. Zn(2+) serves as cofactor.

Its subcellular location is the cytoplasm. The protein resides in the nucleoid. Involved in control of chromosome replication initiation. Inhibits the cooperative binding of DnaA to the oriC region, thus negatively regulating initiation of chromosome replication. Inhibits the ability of DnaA-ATP to form a helix on DNA; does not disassemble preformed DnaA-DNA helices. Decreases the residence time of DnaA on the chromosome at its binding sites (oriC, replication forks and promoter-binding sites). Tethers DnaA to the replication machinery via the DNA polymerase beta sliding clamp subunit (dnaN). Associates with oriC and other DnaA targets on the chromosome in a DnaA-dependent manner. The sequence is that of Replication initiation control protein YabA from Streptococcus gordonii (strain Challis / ATCC 35105 / BCRC 15272 / CH1 / DL1 / V288).